Consider the following 388-residue polypeptide: Deoxyuridine 5'-triphosphate nucleotidohydrolase (388 aa).

Over residues 77–88 (EEKYDKEQHPGE) the composition is skewed to basic and acidic residues. 2 disordered regions span residues 77–96 (EEKY…SPLP) and 336–388 (THTP…PRHP). The segment covering 351-363 (VDDDVDETEEDEK) has biased composition (acidic residues).

Belongs to the dUTPase family. Mg(2+) serves as cofactor.

The protein resides in the virion. It carries out the reaction dUTP + H2O = dUMP + diphosphate + H(+). It functions in the pathway pyrimidine metabolism; dUMP biosynthesis; dUMP from dCTP (dUTP route): step 2/2. Involved in nucleotide metabolism: produces dUMP, the immediate precursor of thymidine nucleotides and decreases the intracellular concentration of dUTP to avoid uracil incorporation into viral DNA. This chain is Deoxyuridine 5'-triphosphate nucleotidohydrolase, found in Human cytomegalovirus (strain AD169) (HHV-5).